A 461-amino-acid chain; its full sequence is Propanal dehydrogenase (CoA-propanoylating) (461 aa).

The tract at residues 1–18 (MNTSELETLIRNILSEQL) is targets protein to the BMC.

Belongs to the EutE/PduP family. In terms of assembly, interacts with PduK, probably with its BMC-containing N-terminus. Interacts with shell proteins PduA and PduJ, interacts with PduQ.

It localises to the bacterial microcompartment. It catalyses the reaction propanal + NAD(+) + CoA = propanoyl-CoA + NADH + H(+). It functions in the pathway polyol metabolism; 1,2-propanediol degradation. A CoA-acylating aldehyde dehydrogenase required for optimal 1,2-propanediol (1,2-PD) degradation. Optimizes growth in the bacterial microcompartment (BMC) dedicated to 1,2-PD degradation by minimizing propionaldehyde toxicity. NAD(+) and NADH are regenerated internally within the Pdu BMC by the PduP and PduQ enzymes, which reduce NAD(+) and oxidize NADH respectively, although there must also be cofactor transport across the BMC. Directly targeted to the BMC. Its function is as follows. Expression of a cosmid containing the full 21-gene pdu operon in E.coli allows E.coli to grow on 1,2-propanediol (1,2-PD) with the appearance of bacterial microcompartments (BMC) in its cytoplasm. Functionally, the 1,2-PD-specific bacterial microcompartment (BMC) concentrates low levels of 1,2-PD catabolic enzymes, concentrates volatile reaction intermediates thus enhancing pathway flux and keeps the level of toxic, mutagenic propionaldehyde low. The polypeptide is Propanal dehydrogenase (CoA-propanoylating) (Citrobacter freundii).